A 283-amino-acid chain; its full sequence is Bis(5'-nucleosyl)-tetraphosphatase, symmetrical (283 aa).

Belongs to the Ap4A hydrolase family.

It catalyses the reaction P(1),P(4)-bis(5'-adenosyl) tetraphosphate + H2O = 2 ADP + 2 H(+). Hydrolyzes diadenosine 5',5'''-P1,P4-tetraphosphate to yield ADP. This chain is Bis(5'-nucleosyl)-tetraphosphatase, symmetrical, found in Serratia proteamaculans (strain 568).